Reading from the N-terminus, the 613-residue chain is 4-hydroxy-3-methylbut-2-en-1-yl diphosphate synthase (flavodoxin) (613 aa).

Positions 521, 524, 555, and 562 each coordinate [4Fe-4S] cluster.

It belongs to the IspG family. It depends on [4Fe-4S] cluster as a cofactor.

It catalyses the reaction (2E)-4-hydroxy-3-methylbut-2-enyl diphosphate + oxidized [flavodoxin] + H2O + 2 H(+) = 2-C-methyl-D-erythritol 2,4-cyclic diphosphate + reduced [flavodoxin]. The protein operates within isoprenoid biosynthesis; isopentenyl diphosphate biosynthesis via DXP pathway; isopentenyl diphosphate from 1-deoxy-D-xylulose 5-phosphate: step 5/6. Converts 2C-methyl-D-erythritol 2,4-cyclodiphosphate (ME-2,4cPP) into 1-hydroxy-2-methyl-2-(E)-butenyl 4-diphosphate. This Bacteroides thetaiotaomicron (strain ATCC 29148 / DSM 2079 / JCM 5827 / CCUG 10774 / NCTC 10582 / VPI-5482 / E50) protein is 4-hydroxy-3-methylbut-2-en-1-yl diphosphate synthase (flavodoxin).